A 132-amino-acid chain; its full sequence is U10-hexatoxin-Hi1a (132 aa).

A signal peptide spans 1 to 20 (MKGFIVFSLSLCLVFTVCLA). Residues 21-30 (EDELMKEAVR) constitute a propeptide that is removed on maturation.

In terms of processing, contains 5 disulfide bonds. Expressed by the venom gland.

Its subcellular location is the secreted. Functionally, probable ion channel inhibitor. This chain is U10-hexatoxin-Hi1a, found in Hadronyche infensa (Fraser island funnel-web spider).